Consider the following 660-residue polypeptide: V-type ATP synthase subunit I (660 aa).

The next 7 helical transmembrane spans lie at 312 to 332 (FFAF…GLLF), 362 to 382 (ILGL…GMSF), 453 to 473 (FIDN…LSLG), 485 to 505 (IGWI…LGTV), 520 to 540 (GQIG…LAMI), 560 to 580 (VLSY…GATF), and 593 to 613 (SIVI…GGVI).

Belongs to the V-ATPase 116 kDa subunit family.

The protein resides in the cell membrane. Produces ATP from ADP in the presence of a proton gradient across the membrane. The chain is V-type ATP synthase subunit I (atpI) from Chlamydia pneumoniae (Chlamydophila pneumoniae).